Reading from the N-terminus, the 303-residue chain is Nucleotide-binding protein SAR0820 (303 aa).

Glycine 18–serine 25 serves as a coordination point for ATP. GTP is bound at residue aspartate 69–glycine 72.

Belongs to the RapZ-like family.

In terms of biological role, displays ATPase and GTPase activities. This Staphylococcus aureus (strain MRSA252) protein is Nucleotide-binding protein SAR0820.